The following is a 176-amino-acid chain: tRNA (cytidine(56)-2'-O)-methyltransferase (176 aa).

Residues leucine 86 and 111 to 115 (GAEKV) each bind S-adenosyl-L-methionine.

The protein belongs to the aTrm56 family. In terms of assembly, homodimer.

The protein localises to the cytoplasm. It carries out the reaction cytidine(56) in tRNA + S-adenosyl-L-methionine = 2'-O-methylcytidine(56) in tRNA + S-adenosyl-L-homocysteine + H(+). In terms of biological role, specifically catalyzes the AdoMet-dependent 2'-O-ribose methylation of cytidine at position 56 in tRNAs. The polypeptide is tRNA (cytidine(56)-2'-O)-methyltransferase (Methanoregula boonei (strain DSM 21154 / JCM 14090 / 6A8)).